Reading from the N-terminus, the 64-residue chain is Alpha-conotoxin-like Ac1.1a (64 aa).

The N-terminal stretch at Met1–Ser21 is a signal peptide. The propeptide occupies Tyr22–Arg47. 2 disulfides stabilise this stretch: Cys51-Cys56 and Cys52-Cys62. Cys62 carries the cysteine amide modification.

This sequence belongs to the conotoxin A superfamily. In terms of tissue distribution, expressed by the venom duct.

The protein resides in the secreted. In terms of biological role, alpha-conotoxins act on postsynaptic membranes, they bind to the nicotinic acetylcholine receptors (nAChR) and thus inhibit them. The chain is Alpha-conotoxin-like Ac1.1a from Conus achatinus (Little frog cone).